Reading from the N-terminus, the 344-residue chain is Dihydroorotate dehydrogenase (quinone) (344 aa).

Residues 65 to 69 and T89 contribute to the FMN site; that span reads AGLDK. A substrate-binding site is contributed by K69. 114 to 118 contacts substrate; the sequence is NRMGF. Positions 145 and 178 each coordinate FMN. N178 is a substrate binding site. S181 serves as the catalytic Nucleophile. Residue N183 coordinates substrate. FMN contacts are provided by K223 and T251. 252-253 is a binding site for substrate; sequence NT. Residues G274, G303, and 324-325 each bind FMN; that span reads YS.

The protein belongs to the dihydroorotate dehydrogenase family. Type 2 subfamily. In terms of assembly, monomer. Requires FMN as cofactor.

It localises to the cell membrane. It catalyses the reaction (S)-dihydroorotate + a quinone = orotate + a quinol. Its pathway is pyrimidine metabolism; UMP biosynthesis via de novo pathway; orotate from (S)-dihydroorotate (quinone route): step 1/1. Catalyzes the conversion of dihydroorotate to orotate with quinone as electron acceptor. In Cupriavidus necator (strain ATCC 17699 / DSM 428 / KCTC 22496 / NCIMB 10442 / H16 / Stanier 337) (Ralstonia eutropha), this protein is Dihydroorotate dehydrogenase (quinone).